We begin with the raw amino-acid sequence, 312 residues long: Undecaprenyl-diphosphatase (312 aa).

7 helical membrane-spanning segments follow: residues 74–94 (GVAF…WYFW), 122–142 (VSIG…KVFI), 154–174 (VAIA…ERIG), 183–203 (LDIR…IPGV), 226–246 (FSFL…LKTL), 254–274 (VGLV…YIAI), and 288–308 (IFIW…ISGV).

This sequence belongs to the UppP family.

It localises to the cell inner membrane. It carries out the reaction di-trans,octa-cis-undecaprenyl diphosphate + H2O = di-trans,octa-cis-undecaprenyl phosphate + phosphate + H(+). Its function is as follows. Catalyzes the dephosphorylation of undecaprenyl diphosphate (UPP). Confers resistance to bacitracin. This chain is Undecaprenyl-diphosphatase, found in Trichodesmium erythraeum (strain IMS101).